We begin with the raw amino-acid sequence, 338 residues long: Fructose-1,6-bisphosphatase class 1 1 (338 aa).

Positions 94, 116, 118, and 119 each coordinate Mg(2+). Residues 119-122 (DGSS), Asn210, and Lys276 contribute to the substrate site. Glu282 provides a ligand contact to Mg(2+).

This sequence belongs to the FBPase class 1 family. In terms of assembly, homotetramer. It depends on Mg(2+) as a cofactor.

It localises to the cytoplasm. It carries out the reaction beta-D-fructose 1,6-bisphosphate + H2O = beta-D-fructose 6-phosphate + phosphate. Its pathway is carbohydrate biosynthesis; gluconeogenesis. This Paraburkholderia phymatum (strain DSM 17167 / CIP 108236 / LMG 21445 / STM815) (Burkholderia phymatum) protein is Fructose-1,6-bisphosphatase class 1 1.